Consider the following 154-residue polypeptide: MNQKYEVEEIKNKELVKLARMLIDYYHIQGMVKGGGAGRNSRYFMYLEKEDDKKYIVAVAWLHDNTPFRFIAQQYNIPNDRSYFIRRVTKTAPGDHLVNFLNDLAEKLKKDGFEVLWTLGFPDHSNALYKKAGFKLVGQTSRTKHEVYVKYLNK.

This is an uncharacterized protein from Sulfolobus islandicus rod-shaped virus 1 (SIRV-1).